Consider the following 287-residue polypeptide: Homoserine kinase (287 aa).

Residue 78–88 (PLAHGLGSSSS) participates in ATP binding.

The protein belongs to the GHMP kinase family. Homoserine kinase subfamily.

Its subcellular location is the cytoplasm. It catalyses the reaction L-homoserine + ATP = O-phospho-L-homoserine + ADP + H(+). The protein operates within amino-acid biosynthesis; L-threonine biosynthesis; L-threonine from L-aspartate: step 4/5. Functionally, catalyzes the ATP-dependent phosphorylation of L-homoserine to L-homoserine phosphate. This chain is Homoserine kinase, found in Lactobacillus acidophilus (strain ATCC 700396 / NCK56 / N2 / NCFM).